A 64-amino-acid polypeptide reads, in one-letter code: DNA-binding protein 7a (64 aa).

An N6-methyllysine; partial mark is found at Lys5 and Lys7.

This sequence belongs to the 7 kDa DNA-binding/endoribonuclease P2 family. In terms of assembly, homodimer. Post-translationally, lys-5 and Lys-7 were found to be 60% monomethylated. In terms of processing, ADP-ribosylated by endogenous proteins in vitro.

Its function is as follows. Can constrain negative DNA supercoils. May be involved in maintaining the integrity of the genome at high temperature. Has RNA endonuclease activity with a narrow substrate specificity; the cleavage products are 3'-phosphooligonucleotides. This Saccharolobus solfataricus (strain ATCC 35092 / DSM 1617 / JCM 11322 / P2) (Sulfolobus solfataricus) protein is DNA-binding protein 7a (sso7a1).